A 353-amino-acid chain; its full sequence is Inositol-tetrakisphosphate 1-kinase 3 (353 aa).

Positions 1–25 are disordered; the sequence is MKLTDNEEITMNGTREMETTEQETS. 1D-myo-inositol 1,3,4-trisphosphate contacts are provided by Lys-50 and Lys-92. Residues Arg-127 and Lys-177 each contribute to the ATP site. The 213-residue stretch at 138–350 folds into the ATP-grasp domain; that stretch reads NLSDSNGRVG…QSQCKKRALA (213 aa). 2 residues coordinate 1D-myo-inositol 1,3,4-trisphosphate: His-188 and Lys-220. ATP contacts are provided by residues 209-220 and Ser-235; that span reads QEFVNHGGVLFK. The Mg(2+) site is built by Asp-300, Asp-315, and Asn-317. Residue Asn-317 participates in 1D-myo-inositol 1,3,4-trisphosphate binding.

It belongs to the ITPK1 family. As to quaternary structure, monomer. Mg(2+) serves as cofactor. As to expression, highly expressed in leaves and flowers, and at lower levels in roots, stems, cauline leaves and siliques.

It carries out the reaction 1D-myo-inositol 3,4,5,6-tetrakisphosphate + ATP = 1D-myo-inositol 1,3,4,5,6-pentakisphosphate + ADP + H(+). The enzyme catalyses 1D-myo-inositol 1,3,4-trisphosphate + ATP = 1D-myo-inositol 1,3,4,5-tetrakisphosphate + ADP + H(+). The catalysed reaction is 1D-myo-inositol 1,3,4-trisphosphate + ATP = 1D-myo-inositol 1,3,4,6-tetrakisphosphate + ADP + H(+). Kinase that can phosphorylate various inositol polyphosphate such as Ins(3,4,5,6)P4 or Ins(1,3,4)P3. Phosphorylates Ins(3,4,5,6)P4 to form InsP5. This reaction is thought to have regulatory importance, since Ins(3,4,5,6)P4 is an inhibitor of plasma membrane Ca(2+)-activated Cl(-) channels, while Ins(1,3,4,5,6)P5 is not. Also phosphorylates Ins(1,3,4)P3 or a racemic mixture of Ins(1,4,6)P3 and Ins(3,4,6)P3 to form InsP4. Ins(1,3,4,6)P4 is an essential molecule in the hexakisphosphate (InsP6) pathway. The polypeptide is Inositol-tetrakisphosphate 1-kinase 3 (ITPK3) (Arabidopsis thaliana (Mouse-ear cress)).